Consider the following 229-residue polypeptide: 23 kDa piroplasm membrane protein (229 aa).

An N-terminal signal peptide occupies residues 1–19; it reads MNKYFKVFFFVLLTHALKS. The Extracellular segment spans residues 20 to 203; that stretch reads ALIFGQATLQ…EKEDTNKKKY (184 aa). Residues 204-224 traverse the membrane as a helical segment; it reads VLMVVVVVVFVVVASLVVFLV. The Cytoplasmic segment spans residues 225–229; sequence KFCLK.

The protein resides in the membrane. The sequence is that of 23 kDa piroplasm membrane protein from Theileria parva (East coast fever infection agent).